A 354-amino-acid polypeptide reads, in one-letter code: UPF0283 membrane protein plu2581 (354 aa).

3 consecutive transmembrane segments (helical) span residues methionine 71–isoleucine 91, serine 101–valine 121, and glutamate 214–tryptophan 234.

It belongs to the UPF0283 family.

The protein localises to the cell inner membrane. This chain is UPF0283 membrane protein plu2581, found in Photorhabdus laumondii subsp. laumondii (strain DSM 15139 / CIP 105565 / TT01) (Photorhabdus luminescens subsp. laumondii).